The primary structure comprises 141 residues: Nucleoside diphosphate kinase (141 aa).

The ATP site is built by lysine 11, phenylalanine 59, arginine 87, threonine 93, arginine 104, and asparagine 114. The active-site Pros-phosphohistidine intermediate is the histidine 117.

The protein belongs to the NDK family. In terms of assembly, homotetramer. It depends on Mg(2+) as a cofactor.

It is found in the cytoplasm. It catalyses the reaction a 2'-deoxyribonucleoside 5'-diphosphate + ATP = a 2'-deoxyribonucleoside 5'-triphosphate + ADP. The enzyme catalyses a ribonucleoside 5'-diphosphate + ATP = a ribonucleoside 5'-triphosphate + ADP. Major role in the synthesis of nucleoside triphosphates other than ATP. The ATP gamma phosphate is transferred to the NDP beta phosphate via a ping-pong mechanism, using a phosphorylated active-site intermediate. This is Nucleoside diphosphate kinase from Ralstonia nicotianae (strain ATCC BAA-1114 / GMI1000) (Ralstonia solanacearum).